Here is an 85-residue protein sequence, read N- to C-terminus: Large ribosomal subunit protein bL27 (85 aa).

The tract at residues 1 to 21 (MAHKKAAGSTKNGRDSNAKRL) is disordered.

It belongs to the bacterial ribosomal protein bL27 family.

This chain is Large ribosomal subunit protein bL27, found in Hydrogenovibrio crunogenus (strain DSM 25203 / XCL-2) (Thiomicrospira crunogena).